Reading from the N-terminus, the 348-residue chain is Holliday junction branch migration complex subunit RuvB (348 aa).

Residues 4-184 (ADRLIAASGR…FGIVQRLEFY (181 aa)) are large ATPase domain (RuvB-L). Residues I23, R24, G65, K68, T69, T70, 131-133 (EDF), R174, Y184, and R221 contribute to the ATP site. A Mg(2+)-binding site is contributed by T69. The small ATPAse domain (RuvB-S) stretch occupies residues 185 to 255 (SDKDLATIVS…VADMALNLLD (71 aa)). The tract at residues 258–348 (ERGFDHSDRR…GGDFSEPGDE (91 aa)) is head domain (RuvB-H). DNA is bound by residues R294, R313, and R318.

The protein belongs to the RuvB family. In terms of assembly, homohexamer. Forms an RuvA(8)-RuvB(12)-Holliday junction (HJ) complex. HJ DNA is sandwiched between 2 RuvA tetramers; dsDNA enters through RuvA and exits via RuvB. An RuvB hexamer assembles on each DNA strand where it exits the tetramer. Each RuvB hexamer is contacted by two RuvA subunits (via domain III) on 2 adjacent RuvB subunits; this complex drives branch migration. In the full resolvosome a probable DNA-RuvA(4)-RuvB(12)-RuvC(2) complex forms which resolves the HJ.

It is found in the cytoplasm. It carries out the reaction ATP + H2O = ADP + phosphate + H(+). Functionally, the RuvA-RuvB-RuvC complex processes Holliday junction (HJ) DNA during genetic recombination and DNA repair, while the RuvA-RuvB complex plays an important role in the rescue of blocked DNA replication forks via replication fork reversal (RFR). RuvA specifically binds to HJ cruciform DNA, conferring on it an open structure. The RuvB hexamer acts as an ATP-dependent pump, pulling dsDNA into and through the RuvAB complex. RuvB forms 2 homohexamers on either side of HJ DNA bound by 1 or 2 RuvA tetramers; 4 subunits per hexamer contact DNA at a time. Coordinated motions by a converter formed by DNA-disengaged RuvB subunits stimulates ATP hydrolysis and nucleotide exchange. Immobilization of the converter enables RuvB to convert the ATP-contained energy into a lever motion, pulling 2 nucleotides of DNA out of the RuvA tetramer per ATP hydrolyzed, thus driving DNA branch migration. The RuvB motors rotate together with the DNA substrate, which together with the progressing nucleotide cycle form the mechanistic basis for DNA recombination by continuous HJ branch migration. Branch migration allows RuvC to scan DNA until it finds its consensus sequence, where it cleaves and resolves cruciform DNA. This Pseudomonas putida (strain GB-1) protein is Holliday junction branch migration complex subunit RuvB.